The sequence spans 407 residues: Na(+)-translocating NADH-quinone reductase subunit F (407 aa).

The chain crosses the membrane as a helical span at residues 3-23 (IILGVVMFTLIVLALVLVILF). The region spanning 32-126 (GDITISVNGD…DMDIELPEEI (95 aa)) is the 2Fe-2S ferredoxin-type domain. [2Fe-2S] cluster is bound by residues C69, C75, C78, and C110. Residues 129-269 (VKKWECTVIS…SGPFGEFFAK (141 aa)) enclose the FAD-binding FR-type domain. A catalytic region spans residues 272–389 (DAEMVFIGGG…PMMNAAVIGM (118 aa)).

Belongs to the NqrF family. Composed of six subunits; NqrA, NqrB, NqrC, NqrD, NqrE and NqrF. [2Fe-2S] cluster is required as a cofactor. FAD serves as cofactor.

It localises to the cell inner membrane. The catalysed reaction is a ubiquinone + n Na(+)(in) + NADH + H(+) = a ubiquinol + n Na(+)(out) + NAD(+). Its function is as follows. NQR complex catalyzes the reduction of ubiquinone-1 to ubiquinol by two successive reactions, coupled with the transport of Na(+) ions from the cytoplasm to the periplasm. The first step is catalyzed by NqrF, which accepts electrons from NADH and reduces ubiquinone-1 to ubisemiquinone by a one-electron transfer pathway. The protein is Na(+)-translocating NADH-quinone reductase subunit F of Vibrio parahaemolyticus serotype O3:K6 (strain RIMD 2210633).